A 719-amino-acid polypeptide reads, in one-letter code: Fatty acid oxidation complex subunit alpha (719 aa).

The enoyl-CoA hydratase/isomerase stretch occupies residues 1-190 (MIYQGNRITV…KLGLVDAVVA (190 aa)). Residue D298 coordinates substrate. The segment at 313 to 719 (HDINEAAVLG…AAGETFYPKA (407 aa)) is 3-hydroxyacyl-CoA dehydrogenase. NAD(+) is bound by residues M326, D345, 402-404 (VVE), K409, and S431. Residue H452 is the For 3-hydroxyacyl-CoA dehydrogenase activity of the active site. Position 455 (N455) interacts with NAD(+). N502 is a binding site for substrate.

It in the N-terminal section; belongs to the enoyl-CoA hydratase/isomerase family. In the C-terminal section; belongs to the 3-hydroxyacyl-CoA dehydrogenase family. Heterotetramer of two alpha chains (FadB) and two beta chains (FadA).

The enzyme catalyses a (3S)-3-hydroxyacyl-CoA + NAD(+) = a 3-oxoacyl-CoA + NADH + H(+). It carries out the reaction a (3S)-3-hydroxyacyl-CoA = a (2E)-enoyl-CoA + H2O. The catalysed reaction is a 4-saturated-(3S)-3-hydroxyacyl-CoA = a (3E)-enoyl-CoA + H2O. It catalyses the reaction (3S)-3-hydroxybutanoyl-CoA = (3R)-3-hydroxybutanoyl-CoA. The enzyme catalyses a (3Z)-enoyl-CoA = a 4-saturated (2E)-enoyl-CoA. It carries out the reaction a (3E)-enoyl-CoA = a 4-saturated (2E)-enoyl-CoA. Its pathway is lipid metabolism; fatty acid beta-oxidation. In terms of biological role, involved in the aerobic and anaerobic degradation of long-chain fatty acids via beta-oxidation cycle. Catalyzes the formation of 3-oxoacyl-CoA from enoyl-CoA via L-3-hydroxyacyl-CoA. It can also use D-3-hydroxyacyl-CoA and cis-3-enoyl-CoA as substrate. In Psychrobacter sp. (strain PRwf-1), this protein is Fatty acid oxidation complex subunit alpha.